A 282-amino-acid polypeptide reads, in one-letter code: Bifunctional protein FolD (282 aa).

NADP(+) contacts are provided by residues 162–164 (GRS), Ser187, and Val228.

The protein belongs to the tetrahydrofolate dehydrogenase/cyclohydrolase family. Homodimer.

The enzyme catalyses (6R)-5,10-methylene-5,6,7,8-tetrahydrofolate + NADP(+) = (6R)-5,10-methenyltetrahydrofolate + NADPH. The catalysed reaction is (6R)-5,10-methenyltetrahydrofolate + H2O = (6R)-10-formyltetrahydrofolate + H(+). Its pathway is one-carbon metabolism; tetrahydrofolate interconversion. Functionally, catalyzes the oxidation of 5,10-methylenetetrahydrofolate to 5,10-methenyltetrahydrofolate and then the hydrolysis of 5,10-methenyltetrahydrofolate to 10-formyltetrahydrofolate. The sequence is that of Bifunctional protein FolD from Thermus thermophilus (strain ATCC 27634 / DSM 579 / HB8).